We begin with the raw amino-acid sequence, 549 residues long: GATA-type transcription factor sreA (549 aa).

The segment at 40-100 (AQAGREHPQD…TSPKSQKDTS (61 aa)) is disordered. 2 stretches are compositionally biased toward basic and acidic residues: residues 43–72 (GREHPQDRHYTDNGSRKSEAGAPHSHHEGE) and 86–97 (HHVEKTSPKSQK). Residues 106–130 (CSNCGTKSTPLWRRSPTGAMICNAC) form a GATA-type 1 zinc finger. The tract at residues 141 to 174 (RPTKRNRTQASPEAYHPQNQSVGSQPDPAVTGSE) is disordered. The cystein-rich region (CRR) stretch occupies residues 180-198 (CPGGGNCNGTGGAEGCDGC). The tract at residues 223-244 (GNSDAVPSPEAEAPARNSGQPE) is disordered. The segment at 251–275 (CQNCGTTVTPLWRRDENGHPICNAC) adopts a GATA-type 2 zinc-finger fold. 3 disordered regions span residues 306 to 332 (RENSPTAATHSSHGSSASPEASSPATL), 375 to 459 (NSGA…RLSS), and 482 to 535 (LGRQ…MREQ). Positions 309 to 331 (SPTAATHSSHGSSASPEASSPAT) are enriched in low complexity. A compositionally biased stretch (pro residues) spans 383–396 (HHPPPPRLLEPGHP). A compositionally biased stretch (low complexity) spans 485–497 (QQQSQPHHPQSSP). Residues 498 to 515 (LAPTQAASQSLPGVSNMD) show a composition bias toward polar residues. A coiled-coil region spans residues 511–549 (VSNMDNHVEDRRAKLQREAEEMREQLRAKERELAELAGQ). The segment covering 516-535 (NHVEDRRAKLQREAEEMREQ) has biased composition (basic and acidic residues).

The protein resides in the nucleus. In terms of biological role, GATA-type transcription repressor that regulates iron- acquisition genes through specific binding GATA sequence elements of target promoters. Iron acquisition regulation is critical for survival under both iron-limiting conditions (to acquire essential iron) and iron-replete conditions (to limit iron toxicity). SreA targets include genes encoding a number of key iron-regulated factors such as those involved in siderophore biosynthesis. The polypeptide is GATA-type transcription factor sreA (Emericella nidulans (strain FGSC A4 / ATCC 38163 / CBS 112.46 / NRRL 194 / M139) (Aspergillus nidulans)).